The primary structure comprises 640 residues: uncharacterized protein (640 aa).

The next 14 helical transmembrane spans lie at G8–F28, L52–I72, L90–A110, L136–L156, V179–W199, P208–V228, W241–A261, E277–A297, Y298–F318, T352–V372, I391–V411, A446–V466, I497–A517, and G619–A639.

This sequence belongs to the complex I subunit 4 family.

It is found in the cell membrane. This is an uncharacterized protein from Mycobacterium tuberculosis (strain CDC 1551 / Oshkosh).